Consider the following 540-residue polypeptide: Chaperonin GroEL 2 (540 aa).

Residues 30 to 33, Lys51, 87 to 91, Gly415, 479 to 481, and Asp495 contribute to the ATP site; these read TLGP, DGTTT, and NAA.

This sequence belongs to the chaperonin (HSP60) family. As to quaternary structure, forms a cylinder of 14 subunits composed of two heptameric rings stacked back-to-back. Interacts with the co-chaperonin GroES.

It is found in the cytoplasm. The enzyme catalyses ATP + H2O + a folded polypeptide = ADP + phosphate + an unfolded polypeptide.. Its function is as follows. Together with its co-chaperonin GroES, plays an essential role in assisting protein folding. The GroEL-GroES system forms a nano-cage that allows encapsulation of the non-native substrate proteins and provides a physical environment optimized to promote and accelerate protein folding. This chain is Chaperonin GroEL 2, found in Burkholderia vietnamiensis (strain G4 / LMG 22486) (Burkholderia cepacia (strain R1808)).